We begin with the raw amino-acid sequence, 1830 residues long: Guanine nucleotide exchange factor SPIKE 1 (1830 aa).

At methionine 1 the chain carries N-acetylmethionine. Residues 285–304 (NTGESASPSSPLAPSMTASS) form a disordered region. Positions 289-304 (SASPSSPLAPSMTASS) are enriched in low complexity. A C2 DOCK-type domain is found at 463–622 (FHCLYVYPVA…NIFKLRLRLC (160 aa)). A Phosphoserine modification is found at serine 1051. The residue at position 1079 (threonine 1079) is a Phosphothreonine. At serine 1095 the chain carries Phosphoserine. Positions 1379–1828 (MAFAPVPDLH…LSHYIPAILS (450 aa)) constitute a DOCKER domain.

Belongs to the DOCK family. Homodimer. Component of SCAR/WAVE and ARP2/3 complexes. Interacts directly with ARAC4/ROP2, ARAC1/ROP3, ARAC5/ROP4, ARAC6/ROP5, ARAC8/ROP10, ARAC9/ROP8, SCAR1, SCAR2, SCAR3, SCAR4, ABI1, ABI2, ABI3 and ABI4. Binds to the inactive GDP-bound form of ARAC3/ROP6. As to expression, expressed ubiquitously, in roots and aerial organs.

The protein resides in the cytoplasm. It is found in the endoplasmic reticulum membrane. Its subcellular location is the nucleus. Its function is as follows. Guanine nucleotide exchange factor (GEF) for Rho and Rac. GEF proteins activate small GTPases by exchanging bound GDP for free GTP. Controls actin polymerization via the two heteromeric complexes WAVE and actin-related protein (ARP) 2/3. Involved in cytoskeletal reorganization required for cell shape (e.g. trichome and cotyledon) control and tissue development. Prevents cortical microtubules organization into parallel arrays oriented perpendicular to the axis of cell elongation to limit anisotropic cell growth during petal development, probably by triggering ARAC4/ROP2 and ARAC3/ROP6 activity. Promotes polarized growth and cell-cell adhesion in the leaf epidermis probably by promoting the formation of endoplasmic reticulum (ER) exit site (ERES) and/or trafficking between the ER and Golgi. Triggers ARAC3/ROP6 activation required for auxin-mediated inhibition of PIN2 internalization during gravitropic responses (, PubMed:22683260). The chain is Guanine nucleotide exchange factor SPIKE 1 from Arabidopsis thaliana (Mouse-ear cress).